Here is a 312-residue protein sequence, read N- to C-terminus: Protein lon-1 (312 aa).

A signal peptide spans 1–18 (MNYLLTALIALLAPISVA). In terms of domain architecture, SCP spans 87–209 (EHNRYRRMVP…GHRNVFVCHY (123 aa)). Residue N142 is glycosylated (N-linked (GlcNAc...) asparagine). The segment covering 265–284 (TTTTESTTTSTTTEEPTTTC) has biased composition (low complexity). The interval 265–312 (TTTTESTTTSTTTEEPTTTCEPDEPEAEGADNNQEEEEENNDGFRMRV) is disordered. Over residues 285–305 (EPDEPEAEGADNNQEEEEENN) the composition is skewed to acidic residues.

It belongs to the CRISP family. As to expression, expressed in hypodermal tissues.

Regulates body size morphogenesis, but does not affect male tail development. The chain is Protein lon-1 (lon-1) from Caenorhabditis elegans.